A 478-amino-acid chain; its full sequence is Keratin, type II cytoskeletal 8 (478 aa).

The segment at 1–97 (MSIRVTQKSY…DPNIQAVRTQ (97 aa)) is head. Phosphoserine; by PKC/PRKCE is present on Ser9. Lys11 participates in a covalent cross-link: Glycyl lysine isopeptide (Lys-Gly) (interchain with G-Cter in SUMO2). 4 positions are modified to phosphoserine: Ser13, Ser15, Ser21, and Ser22. Positions 16-44 (APRSFSSRSYTSGPGSRISSSAFSRVGSS) are disordered. At Arg23 the chain carries Omega-N-methylarginine. Ser24 carries the phosphoserine; by PKC/PRKCE modification. The residue at position 26 (Thr26) is a Phosphothreonine. Phosphoserine is present on residues Ser27 and Ser31. The residue at position 32 (Arg32) is an Omega-N-methylarginine. Phosphoserine is present on residues Ser34 and Ser39. At Arg40 the chain carries Omega-N-methylarginine. Residues Ser43 and Ser44 each carry the phosphoserine modification. At Arg48 the chain carries Asymmetric dimethylarginine; alternate. Residue Arg48 is modified to Omega-N-methylarginine; alternate. Ser81 carries the post-translational modification Phosphoserine; by MAPK. Residues 98–133 (EKEQIKTLNNKFASFIDKVRHLEQQNKVLETKWNLL) form a coil 1A region. Residues 98-409 (EKEQIKTLNN…KLLEGEESRL (312 aa)) enclose the IF rod domain. Position 108 is an N6-malonyllysine (Lys108). Glycyl lysine isopeptide (Lys-Gly) (interchain with G-Cter in SUMO2) cross-links involve residues Lys129 and Lys137. The interval 134–150 (QQQKTARSNIDNMFESY) is linker 1. The interval 151 to 242 (INNLRRQLET…QLYEEEIREM (92 aa)) is coil 1B. Residue Lys204 forms a Glycyl lysine isopeptide (Lys-Gly) (interchain with G-Cter in SUMO1); alternate linkage. Lys204 is covalently cross-linked (Glycyl lysine isopeptide (Lys-Gly) (interchain with G-Cter in SUMO2); alternate). Lys214 bears the N6-acetyllysine mark. Tyr235 bears the Phosphotyrosine mark. The interval 243-266 (QSQISDTSVVLEMDNNRNLDLDGI) is linker 12. Positions 267-405 (IAEVKAQYEE…ATYRKLLEGE (139 aa)) are coil 2. Positions 268–389 (AEVKAQYEEI…EYQELMNVKL (122 aa)) are necessary for interaction with PNN. Residue Lys271 forms a Glycyl lysine isopeptide (Lys-Gly) (interchain with G-Cter in SUMO2) linkage. Phosphoserine is present on Ser281. Residue Lys292 forms a Glycyl lysine isopeptide (Lys-Gly) (interchain with G-Cter in SUMO2) linkage. Lys302 participates in a covalent cross-link: Glycyl lysine isopeptide (Lys-Gly) (interchain with G-Cter in SUMO2); alternate. Lys302 carries the N6-acetyllysine; alternate modification. Lys311 participates in a covalent cross-link: Glycyl lysine isopeptide (Lys-Gly) (interchain with G-Cter in SUMO2). Lys332 is covalently cross-linked (Glycyl lysine isopeptide (Lys-Gly) (interchain with G-Cter in SUMO2); alternate). Lys332 is modified (N6-acetyllysine; alternate). Ser337 carries the post-translational modification Phosphoserine. Residue Lys400 forms a Glycyl lysine isopeptide (Lys-Gly) (interchain with G-Cter in SUMO2) linkage. The tail stretch occupies residues 406–478 (ESRLESGMQN…VSESSDVLSK (73 aa)). A phosphoserine mark is found at Ser407, Ser411, Ser417, Ser424, and Ser433. Lys467 is covalently cross-linked (Glycyl lysine isopeptide (Lys-Gly) (interchain with G-Cter in SUMO1); alternate). Residue Lys467 forms a Glycyl lysine isopeptide (Lys-Gly) (interchain with G-Cter in SUMO2); alternate linkage. Phosphoserine occurs at positions 470, 472, 473, and 477.

Belongs to the intermediate filament family. As to quaternary structure, heterotetramer of two type I and two type II keratins. Forms a heterodimer with KRT18. Associates with KRT20. Interacts with PNN. When associated with KRT19, interacts with DMD. Interacts with TCHP. Interacts with APEX1. Interacts with GPER1. Interacts with EPPK1. Interacts with PKP1 and PKP2. Post-translationally, O-glycosylated. O-GlcNAcylation at multiple sites increases solubility, and decreases stability by inducing proteasomal degradation. In terms of processing, O-glycosylated (O-GlcNAcylated), in a cell cycle-dependent manner. In terms of tissue distribution, expressed in bladder, liver, exocervix and (in very low amounts) esophagus.

It localises to the cytoplasm. The protein localises to the nucleus. Its subcellular location is the nucleoplasm. It is found in the nucleus matrix. In terms of biological role, together with KRT19, helps to link the contractile apparatus to dystrophin at the costameres of striated muscle. The sequence is that of Keratin, type II cytoskeletal 8 (KRT8) from Bos taurus (Bovine).